We begin with the raw amino-acid sequence, 934 residues long: Progesterone receptor (934 aa).

The tract at residues 1–49 (MTELKSKGPRAPHVAGGPPSPEVGSPLLCRPAAGPFQGSQTSDTLPEVS) is disordered. The interval 1–164 (MTELKSKGPR…PATQRVLSPL (164 aa)) is AF3; mediates transcriptional activation. The segment at 1 to 567 (MTELKSKGPR…YSFESLPQKI (567 aa)) is modulating, Pro-Rich. Ser20 is modified (phosphoserine). An LXXL motif 1 motif is present at residues 55–59 (LDGLL). The tract at residues 61 to 239 (PRLCQGQDPP…EDSAGPLLKG (179 aa)) is disordered. Ser81 carries the post-translational modification Phosphoserine. The LXXL motif 2 signature appears at 115–119 (LDTLL). Phosphoserine is present on residues Ser130 and Ser162. The mediates transcriptional transrepression stretch occupies residues 165–305 (MSRSGGKTED…LATTMMDFIH (141 aa)). The Nuclear localization signal signature appears at 183 to 187 (KVLPR). Phosphoserine is present on Ser190. Residues 191–203 (PSRQLLLPTSGSP) show a composition bias toward polar residues. Ser213 is subject to Phosphoserine. Over residues 220-231 (EVEEEDGSESED) the composition is skewed to acidic residues. At Ser294 the chain carries Phosphoserine; by MAPK1. Residues 331–375 (GGAGAASAFAPPQSSPSASSTPVAVGDFPDCAYPPDAEPKDNAYP) form a disordered region. The segment covering 335–350 (AASAFAPPQSSPSASS) has biased composition (low complexity). Ser345 bears the Phosphoserine; by MAPK mark. Lys388 participates in a covalent cross-link: Glycyl lysine isopeptide (Lys-Gly) (interchain with G-Cter in SUMO); alternate. Lys388 is covalently cross-linked (Glycyl lysine isopeptide (Lys-Gly) (interchain with G-Cter in ubiquitin); alternate). Ser400 bears the Phosphoserine; by CDK2 mark. The interval 415–454 (PDFPLGPPPQLPPRAPPSRPGEAAVTAAPASASVSSASSP) is disordered. The span at 418–433 (PLGPPPQLPPRAPPSR) shows a compositional bias: pro residues. Residues 434–454 (PGEAAVTAAPASASVSSASSP) show a composition bias toward low complexity. The segment at 456 to 547 (STLECILYKA…VYPPYLNYLR (92 aa)) is AF1; mediates transcriptional activation. A Glycyl lysine isopeptide (Lys-Gly) (interchain with G-Cter in SUMO) cross-link involves residue Lys532. 2 NR C4-type zinc fingers span residues 568–588 (CLIC…CGSC) and 604–628 (CAGR…LRKC). The nuclear receptor DNA-binding region spans 568-640 (CLICGDEASG…AGMVLGGRKF (73 aa)). Ser677 is subject to Phosphoserine. The NR LBD domain maps to 680 to 914 (QDIQLIPPLI…EFPEMMSEVI (235 aa)). Residues 688–934 (LIKLLMSIEP…MVKPLLFHKK (247 aa)) form an AF2; mediates transcriptional activation region. A progesterone-binding site is contributed by Arg767.

Belongs to the nuclear hormone receptor family. Interacts with SMARD1 and UNC45A. Interacts with CUEDC2; the interaction promotes ubiquitination, decreases sumoylation, and represses transcriptional activity. Interacts with PIAS3; the interaction promotes sumoylation of PR in a hormone-dependent manner, inhibits DNA-binding, and alters nuclear export. Interacts with SP1; the interaction requires ligand-induced phosphorylation on Ser-345 by ERK1/2-MAPK. Interacts with PRMT2. Interacts with NCOA2 and NCOA1. Interacts with KLF9. Interacts with GTF2B. Phosphorylated on multiple serine sites. Several of these sites are hormone-dependent. Phosphorylation on Ser-294 is highly hormone-dependent and modulates ubiquitination and sumoylation on Lys-388. Phosphorylation on Ser-345 also requires induction by hormone. Basal phosphorylation on Ser-81, Ser-162, Ser-190 and Ser-400 is increased in response to progesterone and can be phosphorylated in vitro by the CDK2-A1 complex. Increased levels of phosphorylation on Ser-400 also in the presence of EGF, heregulin, IGF, PMA and FBS. Phosphorylation at this site by CDK2 is ligand-independent, and increases nuclear translocation and transcriptional activity. Phosphorylation at Ser-162 and Ser-294, but not at Ser-190, is impaired during the G(2)/M phase of the cell cycle. Phosphorylation on Ser-345 by ERK1/2 MAPK is required for interaction with SP1. In terms of processing, sumoylation is hormone-dependent and represses transcriptional activity. Sumoylation on all three sites is enhanced by PIAS3. Desumoylated by SENP1. Sumoylation on Lys-388, the main site of sumoylation, is repressed by ubiquitination on the same site, and modulated by phosphorylation at Ser-294. Post-translationally, ubiquitination is hormone-dependent and represses sumoylation on the same site. Promoted by MAPK-mediated phosphorylation on Ser-294. Ubiquitinated by UBR5, leading to its degradation: UBR5 specifically recognizes and binds ligand-bound PGR when it is not associated with coactivators (NCOAs). In presence of NCOAs, the UBR5-degron is not accessible, preventing its ubiquitination and degradation. Palmitoylated by ZDHHC7 and ZDHHC21. Palmitoylation is required for plasma membrane targeting and for rapid intracellular signaling via ERK and AKT kinases and cAMP generation.

The protein localises to the nucleus. It localises to the cytoplasm. Its function is as follows. The steroid hormones and their receptors are involved in the regulation of eukaryotic gene expression and affect cellular proliferation and differentiation in target tissues. Transcriptional activator of several progesteron-dependent promoters in a variety of cell types. Involved in activation of SRC-dependent MAPK signaling on hormone stimulation. In Colobus guereza (Mantled guereza), this protein is Progesterone receptor (PGR).